Consider the following 211-residue polypeptide: Uracil phosphoribosyltransferase (211 aa).

5-phospho-alpha-D-ribose 1-diphosphate contacts are provided by residues Arg-81, Arg-106, and 133-141; that span reads DPMLATGNS. Uracil is bound by residues Ile-196 and 201–203; that span reads GDA. Residue Asp-202 coordinates 5-phospho-alpha-D-ribose 1-diphosphate.

It belongs to the UPRTase family. The cofactor is Mg(2+).

It catalyses the reaction UMP + diphosphate = 5-phospho-alpha-D-ribose 1-diphosphate + uracil. It participates in pyrimidine metabolism; UMP biosynthesis via salvage pathway; UMP from uracil: step 1/1. With respect to regulation, allosterically activated by GTP. Its function is as follows. Catalyzes the conversion of uracil and 5-phospho-alpha-D-ribose 1-diphosphate (PRPP) to UMP and diphosphate. The protein is Uracil phosphoribosyltransferase of Myxococcus xanthus (strain DK1622).